The sequence spans 1169 residues: Protein MBD-R2 (1169 aa).

The THAP-type zinc finger occupies 5-59 (CCVANCPSTSRLLEHNGVTYHSFPLDPIIRAIWIKNSRISLERQITKSVLVCSRH). 3 disordered regions span residues 99-122 (RALQ…STND), 140-211 (SAER…KYSN), and 347-394 (AEEG…CAPQ). Positions 107 to 122 (EGTTETPGNAQSSTND) are enriched in polar residues. Basic and acidic residues predominate over residues 140-160 (SAERKATEEGKTGKAADDVKN). Over residues 190-202 (PAPGSASSSNSPL) the composition is skewed to low complexity. Over residues 353 to 363 (KSPTPVGTPVS) the composition is skewed to polar residues. An MBD domain is found at 445–514 (KPTVIVQDWR…DVYDFSIHRR (70 aa)). Residues 527 to 565 (GYNPQPPPKPRPMDVSMNSTLDQSITSQHSLPSTPMPVK) are disordered. The segment covering 542-559 (SMNSTLDQSITSQHSLPS) has biased composition (polar residues). A C2H2-type zinc finger spans residues 640-665 (YVCPREDCAKTYRKEDFLLIHIRHYH). A disordered region spans residues 714–890 (QDLQQSRSFK…INAALAPPPA (177 aa)). Over residues 726–742 (SVSATATSSTPSDITPT) the composition is skewed to low complexity. Positions 774-784 (PTQSFNPSLSR) are enriched in polar residues. The span at 798–810 (SGSRKSNRQRSQR) shows a compositional bias: basic residues. Polar residues-rich tracts occupy residues 853–862 (AATTPISSID) and 869–881 (SVST…QTDI).

In terms of assembly, component of the non-specific lethal (NLS) histone acetyltransferase complex at least composed of mof, nls1, dgt1/NSL2, Rcd1/NSL3, Rcd5/MCRS2, MBD-R2 and wds.

The protein localises to the nucleus. Its subcellular location is the chromosome. Functionally, component of the non-specific lethal (NLS) complex, a multiprotein complex that promotes expression of housekeeping genes on X chromosome and autosomes. The protein is Protein MBD-R2 of Drosophila melanogaster (Fruit fly).